We begin with the raw amino-acid sequence, 319 residues long: METFPSVGSPGLWAGFIAFVIAMLALDLGVFHRKAHVVKFKEALGWSALWVSLALVFGAGVWWKFGPEPGLQFITGYLIEKSLSVDNIFVFVVIFSALRIPALYQHRVLFWGILSALALRAIMIFAGVAMLARFHWLIYVFGGFLIITGVKLFLQRNKEDNPEEGALMRLARRTIPSTPNFDGHHFFTVENGRKLATPLLMALLLVEASDILFALDSIPAIFAVTTDPFIVFTSNIFAILGLRSMFFMLAGAVEKFSYLKVGLSAVLVFVGTKMAIIDFVKMPPEVSLSVIAGLLGASIVASLIKSRHAPTSDADAPKV.

Helical transmembrane passes span 11 to 31 (GLWA…LGVF), 43 to 63 (ALGW…GVWW), 83 to 103 (LSVD…IPAL), 108 to 128 (VLFW…FAGV), 134 to 154 (FHWL…KLFL), 195 to 215 (LATP…LFAL), 220 to 240 (AIFA…FAIL), 260 to 280 (KVGL…IDFV), and 284 to 304 (PEVS…ASLI).

It belongs to the TerC family.

Its subcellular location is the cell membrane. This is an uncharacterized protein from Myxococcus xanthus.